A 191-amino-acid chain; its full sequence is MYVVLEGVDGAGKSTQVGLLKDRFKNALVTKEPGGTRMGEHLRHIALNENISELARAFLFLSDRAEHIESVIKPALKEKKLIISDRSLISGMAYSQFSSLELNLLATQSVLPDKIILLLIDKEGLKQRLSHKSLDKIENQGTEKLLTIQQKLKTHAHALKEQFGCEVLELDAQKSVWDLHRQIVAFIECVV.

7-14 contacts ATP; the sequence is GVDGAGKS.

This sequence belongs to the thymidylate kinase family.

The enzyme catalyses dTMP + ATP = dTDP + ADP. Phosphorylation of dTMP to form dTDP in both de novo and salvage pathways of dTTP synthesis. In Helicobacter pylori (strain Shi470), this protein is Thymidylate kinase.